The chain runs to 128 residues: Sulfurtransferase TusD (128 aa).

Cysteine 78 functions as the Cysteine persulfide intermediate in the catalytic mechanism.

The protein belongs to the DsrE/TusD family. Heterohexamer, formed by a dimer of trimers. The hexameric TusBCD complex contains 2 copies each of TusB, TusC and TusD. The TusBCD complex interacts with TusE.

Its subcellular location is the cytoplasm. Part of a sulfur-relay system required for 2-thiolation of 5-methylaminomethyl-2-thiouridine (mnm(5)s(2)U) at tRNA wobble positions. Accepts sulfur from TusA and transfers it in turn to TusE. This is Sulfurtransferase TusD from Citrobacter koseri (strain ATCC BAA-895 / CDC 4225-83 / SGSC4696).